A 304-amino-acid chain; its full sequence is Ribonuclease Z (304 aa).

7 residues coordinate Zn(2+): histidine 64, histidine 66, aspartate 68, histidine 69, histidine 141, aspartate 209, and histidine 267. The active-site Proton acceptor is aspartate 68.

Belongs to the RNase Z family. As to quaternary structure, homodimer. The cofactor is Zn(2+).

The catalysed reaction is Endonucleolytic cleavage of RNA, removing extra 3' nucleotides from tRNA precursor, generating 3' termini of tRNAs. A 3'-hydroxy group is left at the tRNA terminus and a 5'-phosphoryl group is left at the trailer molecule.. Its function is as follows. Zinc phosphodiesterase, which displays some tRNA 3'-processing endonuclease activity. Probably involved in tRNA maturation, by removing a 3'-trailer from precursor tRNA. This Thermoplasma volcanium (strain ATCC 51530 / DSM 4299 / JCM 9571 / NBRC 15438 / GSS1) protein is Ribonuclease Z.